The sequence spans 340 residues: Ketol-acid reductoisomerase (NADP(+)) (340 aa).

The 180-residue stretch at 3–182 folds into the KARI N-terminal Rossmann domain; the sequence is VQMEYEKDVK…GAARVGLLET (180 aa). Residues 26–29, Arg-49, Ser-53, and 83–86 contribute to the NADP(+) site; these read YGSQ and DEIQ. His-108 is an active-site residue. Gly-134 is a binding site for NADP(+). A KARI C-terminal knotted domain is found at 183–328; it reads TYKEETEEDL…AELRKAMPFV (146 aa). The Mg(2+) site is built by Asp-191, Glu-195, Glu-227, and Glu-231. Ser-252 contacts substrate.

It belongs to the ketol-acid reductoisomerase family. Mg(2+) serves as cofactor.

The enzyme catalyses (2R)-2,3-dihydroxy-3-methylbutanoate + NADP(+) = (2S)-2-acetolactate + NADPH + H(+). It catalyses the reaction (2R,3R)-2,3-dihydroxy-3-methylpentanoate + NADP(+) = (S)-2-ethyl-2-hydroxy-3-oxobutanoate + NADPH + H(+). It participates in amino-acid biosynthesis; L-isoleucine biosynthesis; L-isoleucine from 2-oxobutanoate: step 2/4. The protein operates within amino-acid biosynthesis; L-valine biosynthesis; L-valine from pyruvate: step 2/4. In terms of biological role, involved in the biosynthesis of branched-chain amino acids (BCAA). Catalyzes an alkyl-migration followed by a ketol-acid reduction of (S)-2-acetolactate (S2AL) to yield (R)-2,3-dihydroxy-isovalerate. In the isomerase reaction, S2AL is rearranged via a Mg-dependent methyl migration to produce 3-hydroxy-3-methyl-2-ketobutyrate (HMKB). In the reductase reaction, this 2-ketoacid undergoes a metal-dependent reduction by NADPH to yield (R)-2,3-dihydroxy-isovalerate. The sequence is that of Ketol-acid reductoisomerase (NADP(+)) from Streptococcus gordonii (strain Challis / ATCC 35105 / BCRC 15272 / CH1 / DL1 / V288).